Here is a 535-residue protein sequence, read N- to C-terminus: Calcium-dependent protein kinase 7 (535 aa).

A disordered region spans residues 1-29 (MGNCCGNPSSATNQSKQGKPKNKNNPFYS). Residue Gly-2 is the site of N-myristoyl glycine attachment. The 259-residue stretch at 59–317 (YDLGREVGRG…AAQVLEHTWI (259 aa)) folds into the Protein kinase domain. Residues 65–73 (VGRGEFGIT) and Lys-88 contribute to the ATP site. Residue Asp-183 is the Proton acceptor of the active site. Ser-223 is modified (phosphoserine). Positions 323–353 (APNVSLGETVKARLKQFSVMNKLKKRALRVI) are autoinhibitory domain. EF-hand domains lie at 360–395 (EEAA…AGQQ), 396–431 (IADT…LKKM), 432–467 (ANDE…ELDN), and 468–504 (TSSE…GTDW). The Ca(2+) site is built by Asp-373, Asn-375, Lys-379, Glu-384, Asp-409, Asp-411, Asp-413, Thr-415, Glu-420, Asp-445, Asn-447, Ser-449, Tyr-451, Glu-456, Asp-482, Asp-484, Asp-486, and Arg-488. At Ser-490 the chain carries Phosphoserine. Residue Glu-493 coordinates Ca(2+).

Belongs to the protein kinase superfamily. Ser/Thr protein kinase family. CDPK subfamily.

It localises to the cell membrane. The enzyme catalyses L-seryl-[protein] + ATP = O-phospho-L-seryl-[protein] + ADP + H(+). The catalysed reaction is L-threonyl-[protein] + ATP = O-phospho-L-threonyl-[protein] + ADP + H(+). Its activity is regulated as follows. Activated by calcium. Autophosphorylation may play an important role in the regulation of the kinase activity. May play a role in signal transduction pathways that involve calcium as a second messenger. This is Calcium-dependent protein kinase 7 (CPK7) from Arabidopsis thaliana (Mouse-ear cress).